A 166-amino-acid polypeptide reads, in one-letter code: Phosphopantetheine adenylyltransferase (166 aa).

T14 provides a ligand contact to substrate. ATP is bound by residues 14–15 and H22; that span reads TF. Substrate-binding residues include K46, L78, and R92. ATP is bound by residues 93–95, E103, and 128–134; these read GLR and WMYLSSS.

The protein belongs to the bacterial CoaD family. Homohexamer. Mg(2+) is required as a cofactor.

The protein localises to the cytoplasm. The catalysed reaction is (R)-4'-phosphopantetheine + ATP + H(+) = 3'-dephospho-CoA + diphosphate. It functions in the pathway cofactor biosynthesis; coenzyme A biosynthesis; CoA from (R)-pantothenate: step 4/5. Reversibly transfers an adenylyl group from ATP to 4'-phosphopantetheine, yielding dephospho-CoA (dPCoA) and pyrophosphate. The sequence is that of Phosphopantetheine adenylyltransferase from Maridesulfovibrio salexigens (strain ATCC 14822 / DSM 2638 / NCIMB 8403 / VKM B-1763) (Desulfovibrio salexigens).